A 376-amino-acid chain; its full sequence is Phytanoyl-CoA hydroxylase-interacting protein-like (376 aa).

Residues serine 12 and serine 15 each carry the phosphoserine modification. A glycan (N-linked (GlcNAc...) asparagine) is linked at asparagine 23. A Phosphoserine modification is found at serine 25. A glycan (N-linked (GlcNAc...) asparagine) is linked at asparagine 37. The Fibronectin type-III domain maps to 52-161 (VPHNIKISNI…EIIEFCTADY (110 aa)).

It belongs to the PHYHIP family.

Functionally, may play a role in the development of the central system. The sequence is that of Phytanoyl-CoA hydroxylase-interacting protein-like (PHYHIPL) from Homo sapiens (Human).